The following is a 276-amino-acid chain: DNA repair protein RecO (276 aa).

The protein belongs to the RecO family.

Involved in DNA repair and RecF pathway recombination. The protein is DNA repair protein RecO of Mycobacterium sp. (strain JLS).